A 718-amino-acid chain; its full sequence is Ribosomal RNA large subunit methyltransferase K/L (718 aa).

Residues 43 to 154 (TQYRILLWSR…QDELVVSLDL (112 aa)) form the THUMP domain.

This sequence belongs to the methyltransferase superfamily. RlmKL family.

The protein resides in the cytoplasm. It catalyses the reaction guanosine(2445) in 23S rRNA + S-adenosyl-L-methionine = N(2)-methylguanosine(2445) in 23S rRNA + S-adenosyl-L-homocysteine + H(+). The catalysed reaction is guanosine(2069) in 23S rRNA + S-adenosyl-L-methionine = N(2)-methylguanosine(2069) in 23S rRNA + S-adenosyl-L-homocysteine + H(+). Functionally, specifically methylates the guanine in position 2445 (m2G2445) and the guanine in position 2069 (m7G2069) of 23S rRNA. In Histophilus somni (strain 129Pt) (Haemophilus somnus), this protein is Ribosomal RNA large subunit methyltransferase K/L.